The sequence spans 130 residues: Small ribosomal subunit protein uS9 (130 aa).

The segment at 109-130 is disordered; that stretch reads RMKERKKYGLKAARRAPQFSKR. Residues 111-130 show a composition bias toward basic residues; it reads KERKKYGLKAARRAPQFSKR.

Belongs to the universal ribosomal protein uS9 family.

In Lachnoclostridium phytofermentans (strain ATCC 700394 / DSM 18823 / ISDg) (Clostridium phytofermentans), this protein is Small ribosomal subunit protein uS9.